Reading from the N-terminus, the 460-residue chain is Orexin receptor type 2 (460 aa).

At 1-54 (MSSTKLEDSLSRRNWSSASELNETQEPFLNPTDYDDEEFLRYLWREYLHPKEYE) the chain is on the extracellular side. 2 N-linked (GlcNAc...) asparagine glycosylation sites follow: Asn14 and Asn22. The segment at 33–49 (DYDDEEFLRYLWREYLH) is required for response to orexin-A. The chain crosses the membrane as a helical span at residues 55-75 (WVLIAGYIIVFVVALIGNVLV). At 76-88 (CVAVWKNHHMRTV) the chain is on the cytoplasmic side. Residues 89-110 (TNYFIVNLSLADVLVTITCLPA) traverse the membrane as a helical segment. Residues 111 to 127 (TLVVDITETWFFGQSLC) are Extracellular-facing. Cysteines 127 and 210 form a disulfide. Residues 128–150 (KVIPYLQTVSVSVSVLTLSCIAL) form a helical membrane-spanning segment. Over 151 to 170 (DRWYAICHPLMFKSTAKRAR) the chain is Cytoplasmic. A helical membrane pass occupies residues 171-191 (NSIVVIWIVSCIIMIPQAIVM). Residues 192–222 (ECSSMLPGLANKTTLFTVCDEHWGGEVYPKM) lie on the Extracellular side of the membrane. N-linked (GlcNAc...) asparagine glycosylation is present at Asn202. A helical transmembrane segment spans residues 223–243 (YHICFFLVTYMAPLCLMILAY). At 244 to 304 (LQIFRKLWCR…QIRARRKTAR (61 aa)) the chain is on the cytoplasmic side. A helical membrane pass occupies residues 305–326 (MLMVVLLVFAICYLPISILNVL). Over 327-342 (KRVFGMFTHTEDRETV) the chain is Extracellular. A helical membrane pass occupies residues 343–366 (YAWFTFSHWLVYANSAANPIIYNF). The Cytoplasmic segment spans residues 367–460 (LSGKFREEFK…SSLLSTWLEV (94 aa)).

Belongs to the G-protein coupled receptor 1 family. In terms of tissue distribution, widely expressed. Isoform 2 not detected in skeletal muscle and kidney.

It localises to the cell membrane. Nonselective, high-affinity receptor for both orexin-A and orexin-B neuropeptides. Triggers an increase in cytoplasmic Ca(2+) levels in response to orexin-A binding. This Mus musculus (Mouse) protein is Orexin receptor type 2 (Hcrtr2).